We begin with the raw amino-acid sequence, 1486 residues long: Chromosome partition protein MukB (1486 aa).

Position 34–41 (Gly-34–Ser-41) interacts with ATP. Coiled coils occupy residues Leu-326 to Gln-418, Leu-444 to Gln-480, and Arg-509 to Val-603. The tract at residues Pro-666–Arg-783 is flexible hinge. 3 coiled-coil regions span residues Glu-835 to Glu-923, Glu-977 to Ala-1115, and Val-1209 to Ser-1266.

Belongs to the SMC family. MukB subfamily. As to quaternary structure, homodimerization via its hinge domain. Binds to DNA via its C-terminal region. Interacts, and probably forms a ternary complex, with MukE and MukF via its C-terminal region. The complex formation is stimulated by calcium or magnesium. Interacts with tubulin-related protein FtsZ.

Its subcellular location is the cytoplasm. The protein localises to the nucleoid. Functionally, plays a central role in chromosome condensation, segregation and cell cycle progression. Functions as a homodimer, which is essential for chromosome partition. Involved in negative DNA supercoiling in vivo, and by this means organize and compact chromosomes. May achieve or facilitate chromosome segregation by condensation DNA from both sides of a centrally located replisome during cell division. The sequence is that of Chromosome partition protein MukB from Escherichia coli O17:K52:H18 (strain UMN026 / ExPEC).